The following is a 189-amino-acid chain: GTPase NRas (189 aa).

GTP contacts are provided by residues 10–18 and 29–30; these read GAGGVGKSA and VD. Positions 32–40 match the Effector region motif; sequence YDPTIEDSY. 57 to 61 contributes to the GTP binding site; it reads DTAGQ. Ser89 carries the phosphoserine modification. A GTP-binding site is contributed by 116–119; it reads NKCD. Residues 166–185 form a hypervariable region region; it reads YRLKKLNSSDDGTQGCMGSP. Residue Lys170 forms a Glycyl lysine isopeptide (Lys-Gly) (interchain with G-Cter in ubiquitin) linkage. Cys181 is lipidated: S-palmitoyl cysteine. Cys186 is lipidated: S-farnesyl cysteine. The propeptide at 187–189 is removed in mature form; sequence VLM.

The protein belongs to the small GTPase superfamily. Ras family. Interacts (active GTP-bound form preferentially) with RGS14. Interacts (active GTP-bound form) with RASSF7. Interacts (active GTP-bound form) with both SHOC2 and PP1c (all isoforms) to form a tertiary complex; SHOC2 and PP1c preferably bind M-Ras/MRAS, but they also bind K-Ras/KRAS, N-Ras/NRAS and H-Ras/HRAS. Palmitoylated by the ZDHHC9-GOLGA7 complex. Depalmitoylated by ABHD17A, ABHD17B and ABHD17C. A continuous cycle of de- and re-palmitoylation regulates rapid exchange between plasma membrane and Golgi. In terms of processing, acetylation at Lys-104 prevents interaction with guanine nucleotide exchange factors (GEFs). Post-translationally, ubiquitinated by the BCR(LZTR1) E3 ubiquitin ligase complex at Lys-170 in a non-degradative manner, leading to inhibit Ras signaling by decreasing Ras association with membranes. Phosphorylation at Ser-89 enhances NRAS association with its downstream effectors.

Its subcellular location is the cell membrane. It is found in the golgi apparatus membrane. It catalyses the reaction GTP + H2O = GDP + phosphate + H(+). Its activity is regulated as follows. Alternates between an inactive form bound to GDP and an active form bound to GTP. Activated by a guanine nucleotide-exchange factor (GEF) and inactivated by a GTPase-activating protein (GAP). Its function is as follows. Ras proteins bind GDP/GTP and possess intrinsic GTPase activity. The chain is GTPase NRas (Nras) from Mus musculus (Mouse).